A 271-amino-acid polypeptide reads, in one-letter code: Membrane protein insertase YidC 1 (271 aa).

Positions 1 to 20 (MKKKLKTFSLILLTGSLLVA) are cleaved as a signal peptide. A lipid anchor (N-palmitoyl cysteine) is attached at cysteine 21. Cysteine 21 carries S-diacylglycerol cysteine lipidation. Transmembrane regions (helical) follow at residues 45–65 (IQWL…TLII), 124–144 (YASV…FQAL), 163–183 (PDPY…STWL), and 201–221 (VMPF…VLYW).

Belongs to the OXA1/ALB3/YidC family. Type 2 subfamily.

The protein localises to the cell membrane. Required for the insertion and/or proper folding and/or complex formation of integral membrane proteins into the membrane. Involved in integration of membrane proteins that insert both dependently and independently of the Sec translocase complex, as well as at least some lipoproteins. The polypeptide is Membrane protein insertase YidC 1 (Streptococcus agalactiae serotype III (strain NEM316)).